We begin with the raw amino-acid sequence, 269 residues long: Eukaryotic translation initiation factor 3 subunit G-1 (269 aa).

Residues 188–266 (AAIRISNLSE…LILSVEWSKP (79 aa)) form the RRM domain.

It belongs to the eIF-3 subunit G family. In terms of assembly, component of the eukaryotic translation initiation factor 3 (eIF-3) complex. The eIF-3 complex interacts with pix.

It is found in the cytoplasm. Its function is as follows. RNA-binding component of the eukaryotic translation initiation factor 3 (eIF-3) complex, which is involved in protein synthesis of a specialized repertoire of mRNAs and, together with other initiation factors, stimulates binding of mRNA and methionyl-tRNAi to the 40S ribosome. The eIF-3 complex specifically targets and initiates translation of a subset of mRNAs involved in cell proliferation. This subunit can bind 18S rRNA. This is Eukaryotic translation initiation factor 3 subunit G-1 from Drosophila willistoni (Fruit fly).